Consider the following 830-residue polypeptide: DNA gyrase subunit A (830 aa).

Residues 33 to 497 (LPDVRDGLKP…AENDIDIEDL (465 aa)) form the Topo IIA-type catalytic domain. The O-(5'-phospho-DNA)-tyrosine intermediate role is filled by Tyr-121. The short motif at 524–530 (QKRGGRG) is the GyrA-box element. Residues 805–830 (KDDSEQLEDSEEVSEVHDAEENNSEE) form a disordered region.

This sequence belongs to the type II topoisomerase GyrA/ParC subunit family. Heterotetramer, composed of two GyrA and two GyrB chains. In the heterotetramer, GyrA contains the active site tyrosine that forms a transient covalent intermediate with DNA, while GyrB binds cofactors and catalyzes ATP hydrolysis.

Its subcellular location is the cytoplasm. It carries out the reaction ATP-dependent breakage, passage and rejoining of double-stranded DNA.. In terms of biological role, a type II topoisomerase that negatively supercoils closed circular double-stranded (ds) DNA in an ATP-dependent manner to modulate DNA topology and maintain chromosomes in an underwound state. Negative supercoiling favors strand separation, and DNA replication, transcription, recombination and repair, all of which involve strand separation. Also able to catalyze the interconversion of other topological isomers of dsDNA rings, including catenanes and knotted rings. Type II topoisomerases break and join 2 DNA strands simultaneously in an ATP-dependent manner. This chain is DNA gyrase subunit A, found in Clostridium acetobutylicum (strain ATCC 824 / DSM 792 / JCM 1419 / IAM 19013 / LMG 5710 / NBRC 13948 / NRRL B-527 / VKM B-1787 / 2291 / W).